The sequence spans 391 residues: Ferrochelatase (391 aa).

H196 and E281 together coordinate Fe cation.

This sequence belongs to the ferrochelatase family.

It localises to the cytoplasm. It catalyses the reaction heme b + 2 H(+) = protoporphyrin IX + Fe(2+). The protein operates within porphyrin-containing compound metabolism; protoheme biosynthesis; protoheme from protoporphyrin-IX: step 1/1. Functionally, catalyzes the ferrous insertion into protoporphyrin IX. The chain is Ferrochelatase from Prochlorococcus marinus subsp. pastoris (strain CCMP1986 / NIES-2087 / MED4).